The primary structure comprises 100 residues: MELTPRDKDKLMLFTAGLLAERRKAKGLKLNYPEAIALITCAIMEGAREGRTVAEMMALGREMLTRDDVMEGIAEMIQDVQVEATFPDGTKLVTVHNPIV.

It belongs to the urease gamma subunit family. In terms of assembly, heterotrimer of UreA (gamma), UreB (beta) and UreC (alpha) subunits. Three heterotrimers associate to form the active enzyme.

It is found in the cytoplasm. The catalysed reaction is urea + 2 H2O + H(+) = hydrogencarbonate + 2 NH4(+). Its pathway is nitrogen metabolism; urea degradation; CO(2) and NH(3) from urea (urease route): step 1/1. This Pseudoalteromonas translucida (strain TAC 125) protein is Urease subunit gamma.